The following is a 418-amino-acid chain: Gamma-glutamyl phosphate reductase (418 aa).

Belongs to the gamma-glutamyl phosphate reductase family.

It localises to the cytoplasm. The catalysed reaction is L-glutamate 5-semialdehyde + phosphate + NADP(+) = L-glutamyl 5-phosphate + NADPH + H(+). Its pathway is amino-acid biosynthesis; L-proline biosynthesis; L-glutamate 5-semialdehyde from L-glutamate: step 2/2. Its function is as follows. Catalyzes the NADPH-dependent reduction of L-glutamate 5-phosphate into L-glutamate 5-semialdehyde and phosphate. The product spontaneously undergoes cyclization to form 1-pyrroline-5-carboxylate. This Halothermothrix orenii (strain H 168 / OCM 544 / DSM 9562) protein is Gamma-glutamyl phosphate reductase.